The following is a 253-amino-acid chain: Phosphoribosylaminoimidazole-succinocarboxamide synthase (253 aa).

Belongs to the SAICAR synthetase family.

It catalyses the reaction 5-amino-1-(5-phospho-D-ribosyl)imidazole-4-carboxylate + L-aspartate + ATP = (2S)-2-[5-amino-1-(5-phospho-beta-D-ribosyl)imidazole-4-carboxamido]succinate + ADP + phosphate + 2 H(+). It participates in purine metabolism; IMP biosynthesis via de novo pathway; 5-amino-1-(5-phospho-D-ribosyl)imidazole-4-carboxamide from 5-amino-1-(5-phospho-D-ribosyl)imidazole-4-carboxylate: step 1/2. In Jannaschia sp. (strain CCS1), this protein is Phosphoribosylaminoimidazole-succinocarboxamide synthase.